The following is a 351-amino-acid chain: Glycerol-1-phosphate dehydrogenase [NAD(P)+] (351 aa).

NAD(+) is bound by residues 97-101 (GKTID) and 119-122 (TAPS). Residue D124 participates in substrate binding. S128 contributes to the NAD(+) binding site. D171 is a substrate binding site. D171 and H251 together coordinate Zn(2+). H255 contributes to the substrate binding site. H267 is a binding site for Zn(2+).

This sequence belongs to the glycerol-1-phosphate dehydrogenase family. Homodimer. The cofactor is Zn(2+).

The protein localises to the cytoplasm. It carries out the reaction sn-glycerol 1-phosphate + NAD(+) = dihydroxyacetone phosphate + NADH + H(+). The enzyme catalyses sn-glycerol 1-phosphate + NADP(+) = dihydroxyacetone phosphate + NADPH + H(+). It functions in the pathway membrane lipid metabolism; glycerophospholipid metabolism. Its function is as follows. Catalyzes the NAD(P)H-dependent reduction of dihydroxyacetonephosphate (DHAP or glycerone phosphate) to glycerol 1-phosphate (G1P). The G1P thus generated is used as the glycerophosphate backbone of phospholipids in the cellular membranes of Archaea. The polypeptide is Glycerol-1-phosphate dehydrogenase [NAD(P)+] (Metallosphaera sedula (strain ATCC 51363 / DSM 5348 / JCM 9185 / NBRC 15509 / TH2)).